Here is a 4835-residue protein sequence, read N- to C-terminus: Midasin (4835 aa).

AAA-ATPase protomer stretches follow at residues 12-161, 324-689, 797-1049, 1096-1375, 1489-1738, and 1821-2110; these read EVLR…PLVL, RSLD…HRFR, MTTI…AEII, KFQD…DYIT, APTT…FGYR, and ALEA…SIDI. Residues 31 to 38, 356 to 363, 814 to 821, 1127 to 1134, 1513 to 1520, and 1839 to 1846 each bind ATP; these read GPSASGRT, GPTGIGKT, GTTSSGKT, GVSGAGKT, GDPGVGKS, and GSPESGKS. A linker region spans residues 2197–4058; the sequence is SVFIASTLNA…DGTGDQNVSK (1862 aa). Disordered stretches follow at residues 4033–4056 and 4108–4523; these read DQKETDNDNQSGLGLGDGTGDQNV and IEEE…LLNP. Composition is skewed to acidic residues over residues 4109–4133, 4141–4150, 4226–4241, 4282–4291, and 4315–4330; these read EEEDSNGSDEEEVLEKEMGDEQGEA, EDDDSAEEYS, ADGEDETVNEELEEEQ, VDIDDNEASD, and NDEEEMQKDTEYDQEN. Positions 4331–4346 are enriched in polar residues; that stretch reads ITDSNPDANEVGTNDQ. Composition is skewed to basic and acidic residues over residues 4347-4360, 4394-4415, and 4429-4438; these read KQTHEDNDQFRQEN, EFQRIWKERLNIHDRESEKDEA, and VEFDDSKSGR. The span at 4468-4477 shows a compositional bias: polar residues; it reads HNSSCETSQS. Positions 4478–4488 are enriched in basic and acidic residues; it reads SHDRPPAEHLN. The region spanning 4629–4818 is the VWFA domain; it reads QVLLAVDDSS…RHIEDLPETL (190 aa).

It belongs to the midasin family. Associates with pre-60S ribosomes in the nucleoplasm.

It localises to the nucleus. Its subcellular location is the nucleolus. It is found in the nucleoplasm. Nuclear chaperone required for maturation and nuclear export of pre-60S ribosome subunits. Functions at successive maturation steps to remove ribosomal factors at critical transition points, first driving the exit of early pre-60S particles from the nucleolus and then driving late pre-60S particles from the nucleus. This chain is Midasin (MDN1), found in Giardia intestinalis (Giardia lamblia).